A 98-amino-acid polypeptide reads, in one-letter code: Large ribosomal subunit protein uL23 (98 aa).

It belongs to the universal ribosomal protein uL23 family. Part of the 50S ribosomal subunit. Contacts protein L29, and trigger factor when it is bound to the ribosome.

Functionally, one of the early assembly proteins it binds 23S rRNA. One of the proteins that surrounds the polypeptide exit tunnel on the outside of the ribosome. Forms the main docking site for trigger factor binding to the ribosome. The sequence is that of Large ribosomal subunit protein uL23 from Nitrobacter winogradskyi (strain ATCC 25391 / DSM 10237 / CIP 104748 / NCIMB 11846 / Nb-255).